Consider the following 163-residue polypeptide: UPF0416 protein RBE_1121 (163 aa).

The protein belongs to the UPF0416 family.

In Rickettsia bellii (strain RML369-C), this protein is UPF0416 protein RBE_1121.